A 64-amino-acid chain; its full sequence is MAKNKGTRILITLECTECRSNLEKRSPGVSRYSTQKNRRNNPERLELKKYCSHCNKTTLHKEIK.

This sequence belongs to the bacterial ribosomal protein bL33 family.

Its subcellular location is the plastid. The protein resides in the chloroplast. The protein is Large ribosomal subunit protein bL33c of Phaeodactylum tricornutum (strain CCAP 1055/1).